A 107-amino-acid polypeptide reads, in one-letter code: UPF0060 membrane protein PSHAa1175 (107 aa).

4 helical membrane-spanning segments follow: residues 3–23 (IFGL…LPYL), 30–50 (SVWL…LLSL), 60–80 (AAYG…VDGI), and 84–104 (TWDL…MFAP).

The protein belongs to the UPF0060 family.

It localises to the cell inner membrane. This Pseudoalteromonas translucida (strain TAC 125) protein is UPF0060 membrane protein PSHAa1175.